Consider the following 341-residue polypeptide: 33 kDa chaperonin (341 aa).

Intrachain disulfides connect cysteine 245–cysteine 247 and cysteine 278–cysteine 281.

It belongs to the HSP33 family. In terms of processing, under oxidizing conditions two disulfide bonds are formed involving the reactive cysteines. Under reducing conditions zinc is bound to the reactive cysteines and the protein is inactive.

Its subcellular location is the cytoplasm. Redox regulated molecular chaperone. Protects both thermally unfolding and oxidatively damaged proteins from irreversible aggregation. Plays an important role in the bacterial defense system toward oxidative stress. The sequence is that of 33 kDa chaperonin from Thermus thermophilus (strain ATCC 27634 / DSM 579 / HB8).